A 140-amino-acid polypeptide reads, in one-letter code: Large ribosomal subunit protein uL11 (140 aa).

This sequence belongs to the universal ribosomal protein uL11 family. As to quaternary structure, part of the ribosomal stalk of the 50S ribosomal subunit. Interacts with L10 and the large rRNA to form the base of the stalk. L10 forms an elongated spine to which L12 dimers bind in a sequential fashion forming a multimeric L10(L12)X complex. One or more lysine residues are methylated.

In terms of biological role, forms part of the ribosomal stalk which helps the ribosome interact with GTP-bound translation factors. This is Large ribosomal subunit protein uL11 from Desulforapulum autotrophicum (strain ATCC 43914 / DSM 3382 / VKM B-1955 / HRM2) (Desulfobacterium autotrophicum).